We begin with the raw amino-acid sequence, 123 residues long: UPF0102 protein PputGB1_4524 (123 aa).

Belongs to the UPF0102 family.

This is UPF0102 protein PputGB1_4524 from Pseudomonas putida (strain GB-1).